The chain runs to 179 residues: Large ribosomal subunit protein uL5 (179 aa).

Belongs to the universal ribosomal protein uL5 family. In terms of assembly, part of the 50S ribosomal subunit; part of the 5S rRNA/L5/L18/L25 subcomplex. Contacts the 5S rRNA and the P site tRNA. Forms a bridge to the 30S subunit in the 70S ribosome.

Functionally, this is one of the proteins that bind and probably mediate the attachment of the 5S RNA into the large ribosomal subunit, where it forms part of the central protuberance. In the 70S ribosome it contacts protein S13 of the 30S subunit (bridge B1b), connecting the 2 subunits; this bridge is implicated in subunit movement. Contacts the P site tRNA; the 5S rRNA and some of its associated proteins might help stabilize positioning of ribosome-bound tRNAs. The chain is Large ribosomal subunit protein uL5 from Shewanella amazonensis (strain ATCC BAA-1098 / SB2B).